Consider the following 237-residue polypeptide: LexA repressor (237 aa).

Residues 26–46 constitute a DNA-binding region (H-T-H motif); sequence FDEMKDALDLRSKSGIHRLIT. Active-site for autocatalytic cleavage activity residues include Ser-158 and Lys-196.

The protein belongs to the peptidase S24 family. In terms of assembly, homodimer.

The catalysed reaction is Hydrolysis of Ala-|-Gly bond in repressor LexA.. Represses a number of genes involved in the response to DNA damage (SOS response), including recA and lexA. In the presence of single-stranded DNA, RecA interacts with LexA causing an autocatalytic cleavage which disrupts the DNA-binding part of LexA, leading to derepression of the SOS regulon and eventually DNA repair. The chain is LexA repressor from Rhodopseudomonas palustris (strain BisB18).